A 477-amino-acid chain; its full sequence is ETS translocation variant 1 (477 aa).

At S94 the chain carries Phosphoserine. The tract at residues 128–179 is disordered; that stretch reads PQVGMRPSNPPTPSSTPVSPLHHASPNTAHTPKPDRAFPAHLPPSQSIPDST. S191 and S216 each carry phosphoserine; by RPS6KA1 and RPS6KA5. K317 participates in a covalent cross-link: Glycyl lysine isopeptide (Lys-Gly) (interchain with G-Cter in SUMO2). A DNA-binding region (ETS) is located at residues 335–415; sequence LQLWQFLVAL…AGERYVYKFV (81 aa).

This sequence belongs to the ETS family. Sumoylated. In terms of processing, phosphorylated at Ser-191 and Ser-216 by RPS6KA1 and RPS6KA5; phosphorylation activates transcriptional activity. Abundant in kidney. Moderate levels seen in the heart, brain, lung, embryo and lower levels seen in spleen, intestine, testis and thymus.

The protein localises to the nucleus. In terms of biological role, transcriptional activator that binds to DNA sequences containing the consensus pentanucleotide 5'-CGGA[AT]-3'. Required for olfactory dopaminergic neuron differentiation; may directly activate expression of tyrosine hydroxylase (TH). This is ETS translocation variant 1 from Mus musculus (Mouse).